A 234-amino-acid chain; its full sequence is Exotoxin type G (234 aa).

A signal peptide spans 1–24 (MKTNILTIIILSCVFSYGSQLAYA).

It belongs to the staphylococcal/streptococcal toxin family.

Functionally, mitogenic for human peripheral blood lymphocytes. This is Exotoxin type G (speG) from Streptococcus pyogenes serotype M3 (strain ATCC BAA-595 / MGAS315).